A 334-amino-acid chain; its full sequence is Flavonol synthase/flavanone 3-hydroxylase (334 aa).

The region spanning 196–295 (DLVYLMKINY…RMSWPVFLEP (100 aa)) is the Fe2OG dioxygenase domain. Fe cation-binding residues include histidine 220, aspartate 222, and histidine 276.

Belongs to the iron/ascorbate-dependent oxidoreductase family. The cofactor is Fe cation. L-ascorbate is required as a cofactor.

Its subcellular location is the cytoplasm. The catalysed reaction is a (2R,3R)-dihydroflavonol + 2-oxoglutarate + O2 = a flavonol + succinate + CO2 + H2O. It carries out the reaction a (2S)-flavan-4-one + 2-oxoglutarate + O2 = a (2R,3R)-dihydroflavonol + succinate + CO2. It functions in the pathway secondary metabolite biosynthesis; flavonoid biosynthesis. Functionally, catalyzes the formation of flavonols from dihydroflavonols. It can act on dihydrokaempferol to produce kaempferol, on dihydroquercetin to produce quercitin and on dihydromyricetin to produce myricetin. The polypeptide is Flavonol synthase/flavanone 3-hydroxylase (FLS) (Eustoma exaltatum subsp. russellianum (Bluebells)).